The primary structure comprises 446 residues: Phosphoglucosamine mutase (446 aa).

Ser102 functions as the Phosphoserine intermediate in the catalytic mechanism. Residues Ser102, Asp241, Asp243, and Asp245 each coordinate Mg(2+). A Phosphoserine modification is found at Ser102.

Belongs to the phosphohexose mutase family. It depends on Mg(2+) as a cofactor. Activated by phosphorylation.

It catalyses the reaction alpha-D-glucosamine 1-phosphate = D-glucosamine 6-phosphate. Catalyzes the conversion of glucosamine-6-phosphate to glucosamine-1-phosphate. In Yersinia pseudotuberculosis serotype O:1b (strain IP 31758), this protein is Phosphoglucosamine mutase.